The primary structure comprises 59 residues: uncharacterized protein (59 aa).

This is an uncharacterized protein from Bacillus subtilis (strain 168).